Reading from the N-terminus, the 290-residue chain is CTP-dependent diacylglycerol kinase 1 (290 aa).

The segment at 1 to 33 (MGTEDAIALPNSTLEPRTEAKQRLSSKSHQVSA) is disordered. Residues 1–77 (MGTEDAIALP…FITKHEIPRK (77 aa)) are Lumenal-facing. N-linked (GlcNAc...) asparagine glycosylation is present at N11. The segment covering 23-33 (RLSSKSHQVSA) has biased composition (polar residues). Phosphoserine occurs at positions 44, 45, and 46. Residues 78–95 (VFHSSIGFITLYLYTQGI) traverse the membrane as a helical segment. The Cytoplasmic segment spans residues 96–103 (NYKNVLWP). A helical membrane pass occupies residues 104–124 (LIYAFIILFILDLIRLNWPFF). The Lumenal portion of the chain corresponds to 125 to 140 (NMLYCRTVGALMRKKE). A helical transmembrane segment spans residues 141–161 (IHTYNGVLWYILGLIFSFNFF). Residues 162–163 (SK) are Cytoplasmic-facing. A helical membrane pass occupies residues 164-184 (DVTLISLFLLSWSDTAAATIG). Residues 185–203 (RKYGHLTPKVARNKSLAGS) lie on the Lumenal side of the membrane. The N-linked (GlcNAc...) asparagine glycan is linked to N197. The chain crosses the membrane as a helical span at residues 204–224 (IAAFTVGVITCWVFYGYFVPA). At 225 to 244 (YSYVNKPGEIQWSPETSRLS) the chain is on the cytoplasmic side. Residues 245–265 (LNMLSLLGGVVAALSEGIDLF) form a helical membrane-spanning segment. The Lumenal portion of the chain corresponds to 266–290 (NWDDNFTIPVLSSLFMNAVIKTFKK). An N-linked (GlcNAc...) asparagine glycan is attached at N270.

Belongs to the DGK1 family. Ca(2+) is required as a cofactor. It depends on Mg(2+) as a cofactor. In terms of processing, CKII-mediated phosphorylation of Ser-45 and Ser-46 regulates its function in the production of PA.

It is found in the endoplasmic reticulum membrane. Its subcellular location is the nucleus membrane. It catalyses the reaction a 1,2-diacyl-sn-glycerol + CTP = a 1,2-diacyl-sn-glycero-3-phosphate + CDP + H(+). It carries out the reaction 1,2-di-(9Z-octadecenoyl)-sn-glycerol + CTP = 1,2-di-(9Z-octadecenoyl)-sn-glycero-3-phosphate + CDP + H(+). With respect to regulation, inhibited by N-ethylmaleimide, dCTP, and sphingoid bases including sphinganine, sphingosine and phytosphingosine. DAG pyrophosphate, cardiolipin, CDP-DAG, and lyso-PA inhibited activity by 23-66%. Also inhibited by Ca(2+) concentrations of more than 1 mM, by addition of EDTA or EGTA at 5 mM, and by 5 mM Mn(2+) and Zn(2+). Stimulated by major membrane phospholipids including phosphatidylcholine, phosphatidylethanolamine, phosphatidylinositol, phosphatidylserine, phosphatidylglycerol, and phosphatidate. Also stimulated to a maximum by addition of TritonX-100 at a concentration of 1 mM, followed by an apparent inhibition of activity at concentrations above 1 mM. CTP-dependent diacylglycerol kinase that catalyzes the phosphorylation of diacylglycerol (DAG) to phosphatidate (PA). Controls phosphatidate levels at the nuclear envelope. Counteracts the activity of PA phosphatase PAH1/SMP2, controlling the levels of PA and DAG for the synthesis of triacylglycerol and membrane phospholipids. May be involved in vesicle trafficking between the endoplasmic reticulum and the Golgi apparatus. Required to convert triacylglycerol-derived DAG to PA for phospholipid synthesis during growth resumption from stationary phase in the absence of de novo fatty acid synthesis. Involved in the resistance to nickel chloride and nalidixic acid. This Saccharomyces cerevisiae (strain ATCC 204508 / S288c) (Baker's yeast) protein is CTP-dependent diacylglycerol kinase 1 (DGK1).